A 724-amino-acid polypeptide reads, in one-letter code: 1,3-beta-galactosyl-N-acetylhexosamine phosphorylase Cphy3030 (724 aa).

The active-site Proton donor is the Asp316.

The protein belongs to the glycoside hydrolase 112 family.

The enzyme catalyses beta-D-galactosyl-(1-&gt;3)-N-acetyl-D-glucosamine + phosphate = alpha-D-galactose 1-phosphate + N-acetyl-D-glucosamine. Its function is as follows. Reversibly phosphorolyzes beta-D-galactopyranosyl-(1-&gt;3)-N-acetyl-D-glucosamine to form alpha-D-galactopyranose 1-phosphate and acetyl-D-glucosamine. Active towards galacto-N-biose and lacto-N-biose. Does not phosphorolyze galacto-N-tetraose or lacto-N-tetraose. In the reverse reaction has activity toward N-acetyl-D-glucosamine and N-acetyl-D-galactosamine, but not L-rhamnose, D-glucose or D-galactose. This Lachnoclostridium phytofermentans (strain ATCC 700394 / DSM 18823 / ISDg) (Clostridium phytofermentans) protein is 1,3-beta-galactosyl-N-acetylhexosamine phosphorylase Cphy3030.